A 119-amino-acid chain; its full sequence is Short coiled-coil protein A (119 aa).

Positions Met-1–Gly-10 are enriched in acidic residues. Residues Met-1–Pro-26 are disordered. Residues Met-48–Leu-95 are a coiled coil.

Belongs to the SCOC family.

The protein resides in the golgi apparatus membrane. Its subcellular location is the golgi apparatus. The protein localises to the trans-Golgi network. It localises to the cytoplasm. It is found in the cytosol. In terms of biological role, positive regulator of amino acid starvation-induced autophagy. In Danio rerio (Zebrafish), this protein is Short coiled-coil protein A (scoca).